Consider the following 997-residue polypeptide: Protein translocase subunit SecA (997 aa).

ATP contacts are provided by residues Gln84, 102-106 (GEGKT), and Asp582. The tract at residues 950–997 (PYVPVPEAKPEPSEVFGVERKRATPPPQPGLSRAERRRLMRQEKKRKK) is disordered. Positions 957-971 (AKPEPSEVFGVERKR) are enriched in basic and acidic residues. Basic residues predominate over residues 984 to 997 (ERRRLMRQEKKRKK).

The protein belongs to the SecA family. In terms of assembly, monomer and homodimer. Part of the essential Sec protein translocation apparatus which comprises SecA, SecYEG and auxiliary proteins SecDF. Other proteins may also be involved.

It is found in the cell inner membrane. Its subcellular location is the cytoplasm. The enzyme catalyses ATP + H2O + cellular proteinSide 1 = ADP + phosphate + cellular proteinSide 2.. In terms of biological role, part of the Sec protein translocase complex. Interacts with the SecYEG preprotein conducting channel. Has a central role in coupling the hydrolysis of ATP to the transfer of proteins into and across the cell membrane, serving as an ATP-driven molecular motor driving the stepwise translocation of polypeptide chains across the membrane. This Thermus thermophilus (strain ATCC BAA-163 / DSM 7039 / HB27) protein is Protein translocase subunit SecA.